The sequence spans 75 residues: Small ribosomal subunit protein bS21 (75 aa).

Belongs to the bacterial ribosomal protein bS21 family.

In Brucella abortus (strain S19), this protein is Small ribosomal subunit protein bS21.